The sequence spans 294 residues: N-acetylmuramic acid 6-phosphate etherase (294 aa).

An SIS domain is found at 54–217 (VIKSFEEEGR…STASMIGVGK (164 aa)). Glu-82 (proton donor) is an active-site residue. Residue Glu-113 is part of the active site.

The protein belongs to the GCKR-like family. MurNAc-6-P etherase subfamily. In terms of assembly, homodimer.

It carries out the reaction N-acetyl-D-muramate 6-phosphate + H2O = N-acetyl-D-glucosamine 6-phosphate + (R)-lactate. Its pathway is amino-sugar metabolism; N-acetylmuramate degradation. In terms of biological role, specifically catalyzes the cleavage of the D-lactyl ether substituent of MurNAc 6-phosphate, producing GlcNAc 6-phosphate and D-lactate. The polypeptide is N-acetylmuramic acid 6-phosphate etherase (Bacillus cereus (strain G9842)).